The following is a 155-amino-acid chain: Transcriptional repressor NrdR (155 aa).

A zinc finger lies at 3-34 (CPFCGNVDTQVKDSRPAEDHVSIRRRRFCPAC). An ATP-cone domain is found at 49–139 (LVVIKTNGKR…VYKNFQAADD (91 aa)).

Belongs to the NrdR family. Requires Zn(2+) as cofactor.

In terms of biological role, negatively regulates transcription of bacterial ribonucleotide reductase nrd genes and operons by binding to NrdR-boxes. This is Transcriptional repressor NrdR from Ruegeria sp. (strain TM1040) (Silicibacter sp.).